We begin with the raw amino-acid sequence, 160 residues long: uncharacterized protein (160 aa).

The signal sequence occupies residues 1–27; that stretch reads MVIGRKAGIIIYVMHALLLLLLSFTFA.

This is an uncharacterized protein from Aquifex aeolicus (strain VF5).